The primary structure comprises 498 residues: Cytochrome P450 71B5 (498 aa).

A helical membrane pass occupies residues 3-23 (IFLCFLLLLPLSLIFLKKLLP). Cys439 serves as a coordination point for heme.

The protein belongs to the cytochrome P450 family. It depends on heme as a cofactor.

The protein resides in the membrane. This is Cytochrome P450 71B5 (CYP71B5) from Arabidopsis thaliana (Mouse-ear cress).